Reading from the N-terminus, the 230-residue chain is NAD(P)H-hydrate epimerase (230 aa).

A YjeF N-terminal domain is found at 11-223 (YAAADIRAAE…DVGLDLSGAT (213 aa)). 59 to 63 (NNGGD) is a binding site for (6S)-NADPHX. K(+) contacts are provided by Asn-60 and Asp-125. (6S)-NADPHX-binding positions include 129–137 (GIGTTDSPA) and Asp-165. Ser-168 is a binding site for K(+).

This sequence belongs to the NnrE/AIBP family. K(+) serves as cofactor.

It carries out the reaction (6R)-NADHX = (6S)-NADHX. The enzyme catalyses (6R)-NADPHX = (6S)-NADPHX. In terms of biological role, catalyzes the epimerization of the S- and R-forms of NAD(P)HX, a damaged form of NAD(P)H that is a result of enzymatic or heat-dependent hydration. This is a prerequisite for the S-specific NAD(P)H-hydrate dehydratase to allow the repair of both epimers of NAD(P)HX. The protein is NAD(P)H-hydrate epimerase of Clavibacter michiganensis subsp. michiganensis (strain NCPPB 382).